Reading from the N-terminus, the 865-residue chain is MITTKELRNKFINYFESKNHSHQPSSSLIPFGDDTLLFTNAGMVQFKDVFLGIEKKDFSRAVTVQKCLRAGGKHNDLDNVGYTARHHTFFEMLGNFSFGDYFKKEAISFAWEFLTKEIKLPVEKLWVTIYASDDEAFDVWHKHIGLAKERIIRIDSSDNFWSMGDTGPCGPCTEIFYDHGEDVAGGLPGTPEQDGDRYIEIWNIVFMQYNRHADGSTTDLPKPSVDTGMGLERISAVLQNVHSNYEIDLFQALIKKAQQVTHAKDINSPSLKVIADHIRACAFLIADGVLPANEGRGYVLRRIIRRAIRHGNKVGAKEIFFYKLVAELVSQMGEVYSQLIDKRELIEKTLIKEEELFLKTIENGIKIFDAEIENLKDNTISGEVAFKLYDTYGFPFDLTADMAREKGLKVDEQAFLAQMQIQKQRSKEAGKFNVDYNSLINSQVKSEFRGYSTLIEDAKVLEIYQDGQLVASTSEQVSAVVVLDKTPFYAESGGQVGDKGILEGIGFEFVVEDVQKSGEAILHIGKLVKGHLNLNDELTARVSDKPRLATAANHSATHLLHKALKLVLGGHAEQKGSLVDENRLRFDFTHDKAISRSKIEQIELLVNQQIRANYPVTTIETSQQKAKSLGAEALFGEKYGDIVRVISMGDFSIELCGGTHVAYTGDIGLFKVTSEGSIASGVRRIEAVTADKAIRHTFTNENKIIAIKDSLKANDTNLIDKIKSMLEQIKNQEKQIAKLKKELLSGSSNDIKETNIGDIKVVVANVDGVDVKTLRNKIDDYKSKNTKVIAVLTTTNADKVQFVIGVSNALTTLIKAGDIAKELSSHIDGKGGGRADMAQGGGNNSANIDQALSQVEKFILNNIKE.

Zn(2+) is bound by residues histidine 554, histidine 558, cysteine 656, and histidine 660.

This sequence belongs to the class-II aminoacyl-tRNA synthetase family. Zn(2+) serves as cofactor.

The protein localises to the cytoplasm. The enzyme catalyses tRNA(Ala) + L-alanine + ATP = L-alanyl-tRNA(Ala) + AMP + diphosphate. Catalyzes the attachment of alanine to tRNA(Ala) in a two-step reaction: alanine is first activated by ATP to form Ala-AMP and then transferred to the acceptor end of tRNA(Ala). Also edits incorrectly charged Ser-tRNA(Ala) and Gly-tRNA(Ala) via its editing domain. This Francisella tularensis subsp. tularensis (strain FSC 198) protein is Alanine--tRNA ligase.